We begin with the raw amino-acid sequence, 443 residues long: Threonine/serine transporter TdcC (443 aa).

The next 11 membrane-spanning stretches (helical) occupy residues 22-42 (TTWTLGLFGTAIGAGVLFFPI), 44-64 (AGFGGLIPILVMLVLAYPIAF), 97-117 (GVVITFLYFFAICPLLWIYGV), 135-155 (ALNRGFVALFLLLLMAVIIWF), 163-183 (VMSFLVWPFIASLVLISLSLI), 207-227 (ILVTVWLGISIMVFSFNFSPI), 259-279 (ASILMVAVVMFFAFSCLFALS), 319-339 (ASIIALVAIFKSFFGHYLGTL), 366-386 (LSMVFIMGSTWLVAYVNPNIL), 389-409 (IEAMGAPIIASLLCLLPMYAI), and 422-442 (IDNVFVTAIGLLTISNIVYKV).

The protein belongs to the amino acid/polyamine transporter 2 family. SdaC/TdcC subfamily.

The protein localises to the cell inner membrane. It catalyses the reaction L-threonine(in) + H(+)(in) = L-threonine(out) + H(+)(out). The enzyme catalyses L-serine(in) + H(+)(in) = L-serine(out) + H(+)(out). In terms of biological role, involved in the import of threonine and serine into the cell, with the concomitant import of a proton (symport system). This Escherichia fergusonii (strain ATCC 35469 / DSM 13698 / CCUG 18766 / IAM 14443 / JCM 21226 / LMG 7866 / NBRC 102419 / NCTC 12128 / CDC 0568-73) protein is Threonine/serine transporter TdcC.